The sequence spans 541 residues: L-ornithine N(5)-monooxygenase (541 aa).

Residues 50–58 (EKQPEFQWH) and Gln69 contribute to the FAD site. Lys74 is a binding site for substrate. 223–226 (SGQS) provides a ligand contact to NADP(+). Residues 269–272 (NEIF) and Asn300 each bind substrate. 300-302 (NYS) serves as a coordination point for NADP(+). The interval 430 to 474 (TEIPKGPDGSLFDASEEEATWRPASPITPASPSPPSTPTSSALSQ) is disordered. Residue 520-522 (SLL) coordinates FAD. Ser523 contributes to the substrate binding site.

It belongs to the lysine N(6)-hydroxylase/L-ornithine N(5)-oxygenase family. In terms of assembly, homotetramer. FAD is required as a cofactor.

It carries out the reaction L-ornithine + NADPH + O2 = N(5)-hydroxy-L-ornithine + NADP(+) + H2O. The enzyme catalyses L-ornithine + NADH + O2 = N(5)-hydroxy-L-ornithine + NAD(+) + H2O. Its pathway is siderophore biosynthesis. L-ornithine N(5)-monooxygenase; part of the siderophore basidioferrin biosynthetic pathway. The biosynthesis of basidioferrin depends on the hydroxylation of ornithine to N(5)-hydroxyornithine, catalyzed by the monooxygenase SMO1. The second step, the acylation of N(5)-hydroxy-L-ornithine is catalyzed by a not yet identified N-acyltransferase. Finally, assembly of basidioferrin is catalyzed by the nonribosomal peptide synthase (NRPS) NPS2 via amide bond formation between three L-AHO molecules to release the linear L-AHO trimer. This is L-ornithine N(5)-monooxygenase (SMO1) from Ceriporiopsis subvermispora (strain B) (White-rot fungus).